The following is a 240-amino-acid chain: Mannosyl-D-glycerate transport/metabolism system repressor MngR (240 aa).

The 69-residue stretch at 4–72 (KPLYRQIADR…QGSGTYVKEE (69 aa)) folds into the HTH gntR-type domain. Residues 32–51 (ESALQTEFGVSRVTVRQALR) constitute a DNA-binding region (H-T-H motif).

Its function is as follows. Represses mngA and mngB. Regulates its own expression. This chain is Mannosyl-D-glycerate transport/metabolism system repressor MngR (mngR), found in Escherichia coli (strain K12).